The chain runs to 317 residues: Retinol dehydrogenase 16 (317 aa).

Phenylalanine 33–leucine 57 is an NAD(+) binding site. Serine 164 is a binding site for substrate. Tyrosine 176 acts as the Proton acceptor in catalysis. Residues leucine 289–valine 309 traverse the membrane as a helical segment.

This sequence belongs to the short-chain dehydrogenases/reductases (SDR) family. As to quaternary structure, homodimer. Post-translationally, not N-glycosylated. Highly expressed in adult liver (at protein level). Detected in endometrium, liver and foreskin. Detected in the spineous layers of adult skin, and at lower levels in basal and granular skin layers. Detected in fetal liver and lung.

It is found in the microsome membrane. Its subcellular location is the endoplasmic reticulum membrane. The catalysed reaction is all-trans-retinol--[retinol-binding protein] + NAD(+) = all-trans-retinal--[retinol-binding protein] + NADH + H(+). It carries out the reaction all-trans-retinol + NAD(+) = all-trans-retinal + NADH + H(+). It catalyses the reaction 13-cis-retinol + NAD(+) = 13-cis-retinal + NADH + H(+). The enzyme catalyses 11-cis-retinol + NAD(+) = 11-cis-retinal + NADH + H(+). The catalysed reaction is 9-cis-retinol + NAD(+) = 9-cis-retinal + NADH + H(+). It carries out the reaction 5alpha-androstane-3alpha,17beta-diol + NAD(+) = 17beta-hydroxy-5alpha-androstan-3-one + NADH + H(+). It catalyses the reaction androsterone + NAD(+) = 5alpha-androstan-3,17-dione + NADH + H(+). The protein operates within cofactor metabolism; retinol metabolism. Inhibited by citral, perillyl alcohol, geraniol, farnesol and geranyl geraniol. Its function is as follows. Oxidoreductase with a preference for NAD. Oxidizes all-trans-retinol, 9-cis-retinol, 11-cis-retinol and 13-cis-retinol to the corresponding aldehydes. Has higher activity towards CRBP-bound retinol than with free retinol. Also oxidizes 3-alpha-hydroxysteroids. Oxidizes androstanediol and androsterone to dihydrotestosterone and androstanedione. Can also catalyze the reverse reaction. The sequence is that of Retinol dehydrogenase 16 from Homo sapiens (Human).